Here is a 122-residue protein sequence, read N- to C-terminus: Phospholipase A2 crotoxin basic chain (122 aa).

Cystine bridges form between Cys-26–Cys-115, Cys-28–Cys-44, Cys-43–Cys-95, Cys-49–Cys-122, Cys-50–Cys-88, Cys-57–Cys-81, and Cys-75–Cys-86. Tyr-27, Gly-29, and Gly-31 together coordinate Ca(2+). Residue His-47 is part of the active site. A Ca(2+)-binding site is contributed by Asp-48. The active site involves Asp-89.

As to quaternary structure, heterodimer of one acidic (CA also named crotapotin) and one basic (CB) subunits; non-covalently linked. It depends on Ca(2+) as a cofactor. As to expression, expressed by the venom gland.

It localises to the secreted. The enzyme catalyses a 1,2-diacyl-sn-glycero-3-phosphocholine + H2O = a 1-acyl-sn-glycero-3-phosphocholine + a fatty acid + H(+). In terms of biological role, heterodimer CA-CB: Crotoxin is a potent presynaptic neurotoxin that possesses phospholipase A2 (PLA2) activity and exerts a lethal action by blocking neuromuscular transmission. It consists of a non-covalent association of a basic and weakly toxic PLA2 subunit (CB), with a small acidic, non-enzymatic and non-toxic subunit (CA also named crotapotin). The complex acts by binding to a specific 48-kDa protein (R48) receptor located on presynaptic membranes, forming a transient ternary complex CA-CB-R48, followed by dissociation of the CA-CB complex and release of the CA subunit. At equilibrium, only the CB subunits remain associated with the specific crotoxin receptor. In addition to neurotoxicity, crotoxin has been found to exert nephrotoxicity, and cardiovascular toxicity. Moreover, anti-inflammatory, immunomodulatory, anti-tumor and analgesic effects of crotoxin have also been reported. Its function is as follows. Monomer CB: The basic subunit of crotoxin is a snake venom phospholipase A2 (PLA2) that exhibits weak neurotoxicity and strong anticoagulant effects by binding to factor Xa (F10) and inhibiting the prothrombinase activity. In addition, it exerts myotoxicity, nephrotoxicity, and cardiovascular toxicity as well as anti-inflammatory, immunomodulatory, anti-tumor and analgesic effects. Also shows a strong antimicrobial activity against X.axonopodis passiforae (Gram-negative) which is completely dependent on the enzymatic activity. PLA2 catalyzes the calcium-dependent hydrolysis of the 2- acyl groups in 3-sn-phosphoglycerides. This chain is Phospholipase A2 crotoxin basic chain, found in Crotalus durissus collilineatus (Brazilian rattlesnake).